Reading from the N-terminus, the 208-residue chain is Uracil phosphoribosyltransferase (208 aa).

5-phospho-alpha-D-ribose 1-diphosphate is bound by residues arginine 78, arginine 103, and 130 to 138 (DPMLATGGS). Residues isoleucine 193 and 198–200 (GDA) contribute to the uracil site. Aspartate 199 contributes to the 5-phospho-alpha-D-ribose 1-diphosphate binding site.

Belongs to the UPRTase family. Requires Mg(2+) as cofactor.

The enzyme catalyses UMP + diphosphate = 5-phospho-alpha-D-ribose 1-diphosphate + uracil. It functions in the pathway pyrimidine metabolism; UMP biosynthesis via salvage pathway; UMP from uracil: step 1/1. Allosterically activated by GTP. Catalyzes the conversion of uracil and 5-phospho-alpha-D-ribose 1-diphosphate (PRPP) to UMP and diphosphate. This chain is Uracil phosphoribosyltransferase, found in Citrobacter koseri (strain ATCC BAA-895 / CDC 4225-83 / SGSC4696).